We begin with the raw amino-acid sequence, 196 residues long: MTPDDLLEEFRAAGALLEGHFILSSGLHSAVFLQKMAIFSDPVRTARVCAGLASVIRDRYGAVDLVVSPAIGGIVPGYETARALGARAIFVERDPGGPFQLRRGFSIPAGSRAVMVEDIVTTGLSSRECLAALRDQPGEVVGAACLIDRSGGRADLGAPLVALATLDIPNYPADQLPPDLAAIPAVKPGSRATTPG.

Residue 117–125 participates in 5-phospho-alpha-D-ribose 1-diphosphate binding; the sequence is EDIVTTGLS. Positions 121 and 149 each coordinate orotate.

Belongs to the purine/pyrimidine phosphoribosyltransferase family. PyrE subfamily. Homodimer. Mg(2+) serves as cofactor.

It catalyses the reaction orotidine 5'-phosphate + diphosphate = orotate + 5-phospho-alpha-D-ribose 1-diphosphate. It participates in pyrimidine metabolism; UMP biosynthesis via de novo pathway; UMP from orotate: step 1/2. Its function is as follows. Catalyzes the transfer of a ribosyl phosphate group from 5-phosphoribose 1-diphosphate to orotate, leading to the formation of orotidine monophosphate (OMP). The chain is Orotate phosphoribosyltransferase from Methylobacterium sp. (strain 4-46).